Reading from the N-terminus, the 594-residue chain is (-)-endo-fenchol synthase, chloroplastic (594 aa).

Residues 1-50 (MSSLVMHVGIVNKPAITYLPTLSRSASNLHNVSSTRLQTSCSLQLDYKPV) constitute a chloroplast transit peptide. 4 residues coordinate Mg(2+): aspartate 348, aspartate 352, aspartate 492, and glutamate 500. A DDXXD motif motif is present at residues 348 to 352 (DDIYD).

It belongs to the terpene synthase family. Tpsa subfamily. Requires Mg(2+) as cofactor. It depends on Mn(2+) as a cofactor. In terms of tissue distribution, expressed at high levels in leaves.

The protein localises to the plastid. It is found in the chloroplast. It carries out the reaction (2E)-geranyl diphosphate = alpha-pinene + diphosphate. The catalysed reaction is (2E)-geranyl diphosphate + H2O = (1S,2S,4R)-endo-fenchol + diphosphate. The enzyme catalyses (2E)-geranyl diphosphate = limonene + diphosphate. It functions in the pathway secondary metabolite biosynthesis; terpenoid biosynthesis. Functionally, monoterpene synthase involved in the biosynthesis of volatile compounds widely used in aromatherapy and folk medicine, and present in culinary herbs. Mediates the conversion of (2E)-geranyl diphosphate (GPP) into alpha fenchol, limonene and alpha-pinene and, as minor compounds, into beta-myrcene, alpha-terpinolene and alpha-phellandrene. This Lavandula pedunculata subsp. lusitanica (French lavender) protein is (-)-endo-fenchol synthase, chloroplastic.